Reading from the N-terminus, the 940-residue chain is UvrABC system protein A (940 aa).

32-39 is an ATP binding site; it reads GLSGSGKS. Residues 252–279 form a C4-type zinc finger; it reads CIDCGISIDEISPRLFSFNSPFGKCDYC. ABC transporter domains follow at residues 309-589 and 609-937; these read WANT…EGSL and SNGK…HYLK. Residue 641 to 648 participates in ATP binding; the sequence is GVSGSGKS. A C4-type zinc finger spans residues 740-766; that stretch reads CEACKGDGIIKIEMQFLSDVYVPCEIC.

The protein belongs to the ABC transporter superfamily. UvrA family. In terms of assembly, forms a heterotetramer with UvrB during the search for lesions.

It localises to the cytoplasm. Functionally, the UvrABC repair system catalyzes the recognition and processing of DNA lesions. UvrA is an ATPase and a DNA-binding protein. A damage recognition complex composed of 2 UvrA and 2 UvrB subunits scans DNA for abnormalities. When the presence of a lesion has been verified by UvrB, the UvrA molecules dissociate. This Clostridium tetani (strain Massachusetts / E88) protein is UvrABC system protein A.